We begin with the raw amino-acid sequence, 516 residues long: Amino-acid permease BAT1 (516 aa).

12 helical membrane-spanning segments follow: residues 33 to 53 (LSVFSNFAISFSIISVLTGIT), 70 to 90 (YGWFLAGSFTMCVGLSMAEIC), 113 to 133 (PLASWMTGWFNIVGQWAVTAS), 164 to 184 (VVIGIHGGILFIHALLNSLPI), 189 to 209 (FIGQLAALWNLLGVLVLMILI), 232 to 252 (LGITSYAYIFVLGLLMSQYTI), 275 to 295 (GIISAIGISILFGWGYILGIS), 328 to 348 (FGSGTGGIVCLGVVAVAVFFC), 383 to 403 (VPINAVWLSALISFCMALTSL), 406 to 426 (IVAFQAMVSIATIGLYIAYAI), 452 to 472 (VVGWVAVLWVVTISVLFSLPV), and 483 to 503 (YTPVAVAGLVAITLSYWLFSA).

It belongs to the amino acid-polyamine-organocation (APC) superfamily. Amino acid/choline transporter (ACT) (TC 2.A.3.4) family. Expressed in roots, rosette leaves, stems, cauline leaves, flowers and siliques.

It localises to the mitochondrion membrane. May play a role in primary carbon metabolism and plant growth, by mediating the transport of GABA from the cytosol to mitochondria. When expressed in a heterologous system (yeast), imports Arg and Ala across the plasma membrane and exports Lys and Glu, but does not transport proline. The protein is Amino-acid permease BAT1 (BAT1) of Arabidopsis thaliana (Mouse-ear cress).